Consider the following 323-residue polypeptide: D-alanine--D-alanine ligase (323 aa).

The ATP-grasp domain maps to Arg121–Lys317. Residue Pro147–Glu199 participates in ATP binding. 3 residues coordinate Mg(2+): Glu270, Glu284, and Asn286.

It belongs to the D-alanine--D-alanine ligase family. Mg(2+) serves as cofactor. Mn(2+) is required as a cofactor.

The protein localises to the cytoplasm. The enzyme catalyses 2 D-alanine + ATP = D-alanyl-D-alanine + ADP + phosphate + H(+). It participates in cell wall biogenesis; peptidoglycan biosynthesis. In terms of biological role, cell wall formation. The chain is D-alanine--D-alanine ligase from Rickettsia peacockii (strain Rustic).